We begin with the raw amino-acid sequence, 323 residues long: Thiamine-monophosphate kinase (323 aa).

4 residues coordinate Mg(2+): Asp30, Ser45, Thr46, and Asp47. His54 is a substrate binding site. Residues Asp75 and Asp122 each contribute to the Mg(2+) site. ATP is bound by residues 121-122 (GD) and Arg146. Asp212 provides a ligand contact to Mg(2+). Ser214 lines the ATP pocket. Residue Asp215 coordinates Mg(2+). Substrate is bound by residues Glu263 and Phe319.

Belongs to the thiamine-monophosphate kinase family.

The enzyme catalyses thiamine phosphate + ATP = thiamine diphosphate + ADP. It functions in the pathway cofactor biosynthesis; thiamine diphosphate biosynthesis; thiamine diphosphate from thiamine phosphate: step 1/1. Catalyzes the ATP-dependent phosphorylation of thiamine-monophosphate (TMP) to form thiamine-pyrophosphate (TPP), the active form of vitamin B1. This chain is Thiamine-monophosphate kinase, found in Buchnera aphidicola subsp. Schizaphis graminum (strain Sg).